Reading from the N-terminus, the 535-residue chain is uncharacterized protein (535 aa).

6 disordered regions span residues 1–58 (MSMK…PRGP), 211–254 (EPPK…PPCI), 313–353 (RRVA…EQVK), 376–416 (RPDK…DQRL), 421–440 (QGLD…DAAW), and 508–535 (SLFE…SRRD). Positions 22–34 (IRRDPWFGGRDNE) are enriched in basic and acidic residues. The SNW stretch occupies residues 179–342 (AQYIRYTPSQ…KARQERSAMR (164 aa)). Over residues 376–393 (RPDKADKLRKERERDISE) the composition is skewed to basic and acidic residues. Residues 511–535 (EHTKEKKRGGDGGDSRGESKRSRRD) show a composition bias toward basic and acidic residues.

The protein belongs to the SNW family.

This is an uncharacterized protein from Caenorhabditis elegans.